A 603-amino-acid polypeptide reads, in one-letter code: Ankyrin repeat and LEM domain-containing protein 2 homolog (603 aa).

A helical; Signal-anchor for type III membrane protein transmembrane segment spans residues 2-22 (GRKSAILAVILAIIYFRSNFS). ANK repeat units follow at residues 161 to 190 (FRYNALHIAAKAGQTEIIAKILELIQNIDF) and 221 to 250 (NSDTPLHFASKFGKIGVVRVLTENSATDRT). Disordered stretches follow at residues 446–465 (ISENLTPDGSDSADDEDDDD) and 505–538 (LPPPPPPQWSNSPNFDYSEGEDSFATPPTTPPPT). Residues 456 to 465 (DSADDEDDDD) are compositionally biased toward acidic residues.

It belongs to the ANKLE2 family. In terms of assembly, interacts with baf-1. Interacts with protein phosphatase 2A (PP2A) components.

Its subcellular location is the nucleus membrane. Involved in mitotic nuclear envelope reassembly by promoting dephosphorylation of baf-1 during mitotic exit. Coordinates the control of baf-1 dephosphorylation by inhibiting VRK1 kinase and promoting dephosphorylation of baf-1 by protein phosphatase 2A (PP2A), thereby facilitating nuclear envelope assembly. It is unclear whether it acts as a real PP2A regulatory subunit or whether it is involved in recruitment of the PP2A complex. The polypeptide is Ankyrin repeat and LEM domain-containing protein 2 homolog (lem-4) (Caenorhabditis elegans).